The sequence spans 295 residues: Small ribosomal subunit protein uS2 (295 aa).

S2 is modified (N-acetylserine). A Phosphoserine modification is found at S43. N6-acetyllysine is present on K52. The segment at 54 to 113 (TWEKLLLAARAIVAIENPADVSVISSRNTGQRAVLKFAAATGATPIAGRFTPGTFTNQIQ) is interaction with PPP1R16B. The residue at position 89 (K89) is an N6-acetyllysine; alternate. K89 participates in a covalent cross-link: Glycyl lysine isopeptide (Lys-Gly) (interchain with G-Cter in SUMO2); alternate. T97 bears the Phosphothreonine mark. Laminin-binding stretches follow at residues 161–180 (IPCN…MLAR) and 205–229 (RDPE…EFQG). [DE]-W-[ST] repeat units follow at residues 230-232 (EWT), 247-249 (DWS), 266-268 (DWS), 275-277 (DWS), and 293-295 (EWS). The tract at residues 242–295 (QPEVADWSEGVQVPSVPIQQFPTEDWSAQPATEDWSAAPTAQATEWVGATTEWS) is laminin-binding. Residues 266 to 295 (DWSAQPATEDWSAAPTAQATEWVGATTEWS) form a disordered region.

Belongs to the universal ribosomal protein uS2 family. As to quaternary structure, monomer (37LRP) and homodimer (67LR). Component of the small ribosomal subunit. Mature ribosomes consist of a small (40S) and a large (60S) subunit. The 40S subunit contains about 33 different proteins and 1 molecule of RNA (18S). The 60S subunit contains about 49 different proteins and 3 molecules of RNA (28S, 5.8S and 5S). Interacts with RPS21. Interacts with several laminins including at least LAMB1. Interacts with MDK. The mature dimeric form interacts with PPP1R16B (via its fourth ankyrin repeat). Interacts with PPP1CA only in the presence of PPP1R16B. Post-translationally, acylated. Acylation may be a prerequisite for conversion of the monomeric 37 kDa laminin receptor precursor (37LRP) to the mature dimeric 67 kDa laminin receptor (67LR), and may provide a mechanism for membrane association. In terms of processing, cleaved by stromelysin-3 (ST3) at the cell surface. Cleavage by stromelysin-3 may be a mechanism to alter cell-extracellular matrix interactions.

The protein localises to the cell membrane. It is found in the cytoplasm. It localises to the nucleus. Required for the assembly and/or stability of the 40S ribosomal subunit. Required for the processing of the 20S rRNA-precursor to mature 18S rRNA in a late step of the maturation of 40S ribosomal subunits. Also functions as a cell surface receptor for laminin. Plays a role in cell adhesion to the basement membrane and in the consequent activation of signaling transduction pathways. May play a role in cell fate determination and tissue morphogenesis. Also acts as a receptor for several other ligands, including the pathogenic prion protein, viruses, and bacteria. Acts as a PPP1R16B-dependent substrate of PPP1CA. This chain is Small ribosomal subunit protein uS2, found in Chlorocebus aethiops (Green monkey).